Here is a 201-residue protein sequence, read N- to C-terminus: Phosphoprotein (201 aa).

Positions 1 to 70 are disordered; it reads MATRPSSLVD…DQRTGREQLS (70 aa). Short sequence motifs (nuclear localization signal) lie at residues 29 to 36 and 181 to 193; these read PRPRKIPR and PPRI…SAPT.

Homomultimer; only active in its oligomeric state. Interacts with nucleoprotein/N. Interacts with matrix/M protein. Interacts with host TBK1. Interacts with polymerase L. Interacts with host HMGB1; this interaction is required to stabilize RNP on chromosomes. Post-translationally, phosphorylated by host PKC epsilon and casein kinase II.

It is found in the host nucleus. Its subcellular location is the host cytoplasm. Essential component of the RNA polymerase transcription and replication complex. Acts as a scaffold which brings L in close proximity to the N-RNA complex. Plays a role in the segregation of the viral genome in host daughter cells during mitosis by interacting with host HMGB1, a host chromatin-remodeling DNA architectural protein, thereby stabilizing RNP on chromosomes. Interacts with host TBK1 and thus interferes with activation of cellular antiviral state. Inhibits cellular histone acetyltransferase activities. The protein is Phosphoprotein (P/X) of Bos taurus (Bovine).